The following is a 295-amino-acid chain: Cytidine deaminase (295 aa).

2 CMP/dCMP-type deaminase domains span residues 48 to 168 (EDAD…FGPA) and 187 to 295 (DDDE…YLSL). 89 to 91 (NME) provides a ligand contact to substrate. Residue H102 participates in Zn(2+) binding. The Proton donor role is filled by E104. Zn(2+) contacts are provided by C129 and C132.

The protein belongs to the cytidine and deoxycytidylate deaminase family. Homodimer. It depends on Zn(2+) as a cofactor.

It carries out the reaction cytidine + H2O + H(+) = uridine + NH4(+). It catalyses the reaction 2'-deoxycytidine + H2O + H(+) = 2'-deoxyuridine + NH4(+). This enzyme scavenges exogenous and endogenous cytidine and 2'-deoxycytidine for UMP synthesis. This is Cytidine deaminase from Vibrio cholerae serotype O1 (strain ATCC 39315 / El Tor Inaba N16961).